Here is a 172-residue protein sequence, read N- to C-terminus: Interferon tau-2 (172 aa).

Cystine bridges form between C1–C99 and C29–C139. An N-linked (GlcNAc...) asparagine glycan is attached at N78.

This sequence belongs to the alpha/beta interferon family. IFN-alphaII subfamily. As to expression, constitutively and exclusively expressed in the mononuclear cells of the extraembryonic trophectoderm.

It localises to the secreted. Paracrine hormone primarily responsible for maternal recognition of pregnancy. Interacts with endometrial receptors, probably type I interferon receptors, and blocks estrogen receptor expression, preventing the estrogen-induced increase in oxytocin receptor expression in the endometrium. This results in the suppression of the pulsatile endometrial release of the luteolytic hormone prostaglandin F2-alpha, hindering the regression of the corpus luteum (luteolysis) and therefore a return to ovarian cyclicity. This, and a possible direct effect of IFN-tau on prostaglandin synthesis, leads in turn to continued ovarian progesterone secretion, which stimulates the secretion by the endometrium of the nutrients required for the growth of the conceptus. In summary, displays particularly high antiviral and antiproliferative potency concurrently with particular weak cytotoxicity, high antiluteolytic activity and immunomodulatory properties. In contrast with other IFNs, IFN-tau is not virally inducible. The sequence is that of Interferon tau-2 (IFNT2) from Bos taurus (Bovine).